The following is a 595-amino-acid chain: Pyranose dehydrogenase (595 aa).

Residues M1–S21 form the signal peptide. N-linked (GlcNAc...) asparagine glycosylation is found at N95 and N110. A Tele-8alpha-FAD histidine modification is found at H123. N-linked (GlcNAc...) asparagine glycans are attached at residues N195, N337, N367, N502, and N510. H530 functions as the Proton acceptor in the catalytic mechanism. Residue N541 is glycosylated (N-linked (GlcNAc...) asparagine). The active site involves H574.

The protein belongs to the GMC oxidoreductase family. In terms of assembly, monomer. Requires FAD as cofactor. In terms of processing, N-glycosylated.

Its subcellular location is the secreted. It catalyses the reaction pyranose + acceptor = pyranos-2-ulose + reduced acceptor.. The catalysed reaction is pyranose + acceptor = pyranos-3-ulose + reduced acceptor.. The enzyme catalyses pyranose + acceptor = pyranos-2,3-diulose + reduced acceptor.. It carries out the reaction a pyranoside + acceptor = a pyranosid-3-ulose + reduced acceptor.. It catalyses the reaction a pyranoside + acceptor = a pyranosid-3,4-diulose + reduced acceptor.. Functionally, catalyzes the single-oxidation or sequential double oxidation reaction of carbohydrates primarily at carbon-2 and/or carbon-3 with the concomitant reduction of the flavin. The enzyme exhibits a broad sugar substrate specificity, oxidizing different aldopyranoses to the corresponding C-1, C-2, C-3 or C-1,2, C-2,3 and C-3,4 (di)dehydro sugars with substrate-specific regioselectivity. Accepts only a narrow range of electron acceptors such as substituted benzoquinones and complexed metal ions and reacts extremely slowly with O(2) as acceptor. May play a role in the natural recycling of plant matter by oxidizing all major monosaccharides in lignocellulose and by reducing quinone compounds or reactive radical species generated during lignin depolymerization. In Agaricus campestris (Field mushroom), this protein is Pyranose dehydrogenase.